A 475-amino-acid polypeptide reads, in one-letter code: Ribulose bisphosphate carboxylase large chain (475 aa).

Positions 123 and 173 each coordinate substrate. The active-site Proton acceptor is Lys-175. Residue Lys-177 participates in substrate binding. Lys-201, Asp-203, and Glu-204 together coordinate Mg(2+). At Lys-201 the chain carries N6-carboxylysine. His-294 (proton acceptor) is an active-site residue. The substrate site is built by Arg-295, His-327, and Ser-379.

This sequence belongs to the RuBisCO large chain family. Type I subfamily. As to quaternary structure, heterohexadecamer of 8 large chains and 8 small chains; disulfide-linked. The disulfide link is formed within the large subunit homodimers. Interacts with assembly factor Raf1 which helps form the holoenzyme, most interaction (and folding) occurs in the cytoplasm. The cofactor is Mg(2+). Post-translationally, the disulfide bond which can form in the large chain dimeric partners within the hexadecamer appears to be associated with oxidative stress and protein turnover.

The protein localises to the carboxysome. The protein resides in the cytoplasm. It catalyses the reaction 2 (2R)-3-phosphoglycerate + 2 H(+) = D-ribulose 1,5-bisphosphate + CO2 + H2O. The enzyme catalyses D-ribulose 1,5-bisphosphate + O2 = 2-phosphoglycolate + (2R)-3-phosphoglycerate + 2 H(+). Functionally, ruBisCO catalyzes two reactions: the carboxylation of D-ribulose 1,5-bisphosphate, the primary event in carbon dioxide fixation, as well as the oxidative fragmentation of the pentose substrate in the photorespiration process. Both reactions occur simultaneously and in competition at the same active site. The polypeptide is Ribulose bisphosphate carboxylase large chain (Thermosynechococcus vestitus (strain NIES-2133 / IAM M-273 / BP-1)).